Consider the following 184-residue polypeptide: ATP synthase subunit b 1 (184 aa).

Residues 36–55 traverse the membrane as a helical segment; the sequence is NILNLAILVGVLVFYGRKVV.

It belongs to the ATPase B chain family. F-type ATPases have 2 components, F(1) - the catalytic core - and F(0) - the membrane proton channel. F(1) has five subunits: alpha(3), beta(3), gamma(1), delta(1), epsilon(1). F(0) has four main subunits: a(1), b(1), b'(1) and c(10-14). The alpha and beta chains form an alternating ring which encloses part of the gamma chain. F(1) is attached to F(0) by a central stalk formed by the gamma and epsilon chains, while a peripheral stalk is formed by the delta, b and b' chains.

It is found in the cellular thylakoid membrane. Its function is as follows. F(1)F(0) ATP synthase produces ATP from ADP in the presence of a proton or sodium gradient. F-type ATPases consist of two structural domains, F(1) containing the extramembraneous catalytic core and F(0) containing the membrane proton channel, linked together by a central stalk and a peripheral stalk. During catalysis, ATP synthesis in the catalytic domain of F(1) is coupled via a rotary mechanism of the central stalk subunits to proton translocation. Component of the F(0) channel, it forms part of the peripheral stalk, linking F(1) to F(0). This chain is ATP synthase subunit b 1, found in Crocosphaera subtropica (strain ATCC 51142 / BH68) (Cyanothece sp. (strain ATCC 51142)).